We begin with the raw amino-acid sequence, 375 residues long: MISITSAEVGMKINEWHRHIQKFNVTDAEMLKAEIERDIEVMEEDQDLLIYYQLMAFRHKIMLEYTLPSDENRMELSEYLNKIEGHKKKLDNMRAYYYNFFRGMYEFRNGEYTRAITYYKKAERKIPTISDKIEKAEFYFKLSEVYYHMKMTHISMHYAELSYNIYKKHELYSVRRIQCHFVIAGNYDDLENHEKALPHLQEALKGAELLKSKNTHIYATAFFNLGNCYHKMDNLNKAARYIEQALVQYRKINSDVLPQAYHDLALIYFKQGKKEQAMDCFRKGIRSAVDFKDELFMNLFEALDVLYIRNGDTPKLLNIFSRLENGKGYPYLEELALLGGNLFDYNGKIEDSIICFKKMVYAQKQISKGECMYEI.

Residues 24–95 are a coiled coil; it reads NVTDAEMLKA…HKKKLDNMRA (72 aa). TPR repeat units lie at residues 96 to 129, 177 to 210, 219 to 252, 258 to 291, 297 to 330, and 333 to 366; these read YYYN…IPTI, IQCH…AELL, ATAF…YRKI, PQAY…AVDF, MNLF…KGYP, and EELA…QKQI.

The protein belongs to the Rap family.

The protein resides in the cytoplasm. Phosphatase activity is inhibited by the phosphatase regulator PhrE. Its function is as follows. Involved in the regulation of sporulation. Acts as a phosphatase that specifically dephosphorylates the sporulation initiation phosphotransferase Spo0F and inhibits its activity. Probably plays a dispensable role in the overall context of sporulation initiation. In Bacillus subtilis (strain 168), this protein is Response regulator aspartate phosphatase E (rapE).